Consider the following 466-residue polypeptide: 3-isopropylmalate dehydratase large subunit (466 aa).

Residues C347, C407, and C410 each contribute to the [4Fe-4S] cluster site.

The protein belongs to the aconitase/IPM isomerase family. LeuC type 1 subfamily. Heterodimer of LeuC and LeuD. It depends on [4Fe-4S] cluster as a cofactor.

The catalysed reaction is (2R,3S)-3-isopropylmalate = (2S)-2-isopropylmalate. The protein operates within amino-acid biosynthesis; L-leucine biosynthesis; L-leucine from 3-methyl-2-oxobutanoate: step 2/4. Functionally, catalyzes the isomerization between 2-isopropylmalate and 3-isopropylmalate, via the formation of 2-isopropylmaleate. The sequence is that of 3-isopropylmalate dehydratase large subunit from Shewanella halifaxensis (strain HAW-EB4).